The following is a 325-amino-acid chain: MINFQLIDGEALLARLQPTLGGIKGKLTPNMDMQKVTWFRTGGLAELFYQPADEVDLAFFLQNLPESIPVTIVGIGSNLLVRDGGIPGVVIRLSAKGFGQVQQVSPTGFLVGAATADKHLAAAALEAEIAGFHFYHGIPGGLGGALKMNAGANGVETAARVVEVYALDRRGQCHTLSLADMHYSYRHCAVPEDFIFTAALLEGKPGNKGDIRAAMDEVALHRESVQPVREKTGGSTFRNPKDISAWRVIDEAGCRGLQIGGAQMSEMHCNFMINTGQATAYDLEALGETVRARVFAYSSHLLQWEIQRIGQFEQGRIVSSFDPFN.

In terms of domain architecture, FAD-binding PCMH-type spans 40–221 (RTGGLAELFY…RAAMDEVALH (182 aa)). R186 is an active-site residue. S235 functions as the Proton donor in the catalytic mechanism. The active site involves E305.

The protein belongs to the MurB family. FAD is required as a cofactor.

Its subcellular location is the cytoplasm. It catalyses the reaction UDP-N-acetyl-alpha-D-muramate + NADP(+) = UDP-N-acetyl-3-O-(1-carboxyvinyl)-alpha-D-glucosamine + NADPH + H(+). Its pathway is cell wall biogenesis; peptidoglycan biosynthesis. Cell wall formation. This chain is UDP-N-acetylenolpyruvoylglucosamine reductase, found in Bartonella henselae (strain ATCC 49882 / DSM 28221 / CCUG 30454 / Houston 1) (Rochalimaea henselae).